Here is a 219-residue protein sequence, read N- to C-terminus: U-scoloptoxin(11)-Sm7a (219 aa).

The first 15 residues, methionine 1–serine 15, serve as a signal peptide directing secretion.

The protein belongs to the scoloptoxin-11 family. Contains 8 disulfide bonds. In terms of tissue distribution, expressed by the venom gland.

Its subcellular location is the secreted. The protein is U-scoloptoxin(11)-Sm7a of Scolopendra morsitans (Tanzanian blue ringleg centipede).